A 149-amino-acid chain; its full sequence is Large ribosomal subunit protein uL15 (149 aa).

A disordered region spans residues methionine 1 to leucine 61. The span at threonine 30 to lysine 39 shows a compositional bias: basic residues.

The protein belongs to the universal ribosomal protein uL15 family. As to quaternary structure, part of the 50S ribosomal subunit.

Binds to the 23S rRNA. The sequence is that of Large ribosomal subunit protein uL15 from Trichlorobacter lovleyi (strain ATCC BAA-1151 / DSM 17278 / SZ) (Geobacter lovleyi).